The primary structure comprises 198 residues: Na(+)-translocating NADH-quinone reductase subunit E (198 aa).

Transmembrane regions (helical) follow at residues 11–31, 35–55, 77–97, 110–130, 140–160, and 176–196; these read SVFI…FLAV, VSTA…AVPV, FLNF…LEMV, GIFL…SFMV, VVYG…LAGI, and LGIT…FSGI.

It belongs to the NqrDE/RnfAE family. Composed of six subunits; NqrA, NqrB, NqrC, NqrD, NqrE and NqrF.

The protein resides in the cell inner membrane. It catalyses the reaction a ubiquinone + n Na(+)(in) + NADH + H(+) = a ubiquinol + n Na(+)(out) + NAD(+). Functionally, NQR complex catalyzes the reduction of ubiquinone-1 to ubiquinol by two successive reactions, coupled with the transport of Na(+) ions from the cytoplasm to the periplasm. NqrA to NqrE are probably involved in the second step, the conversion of ubisemiquinone to ubiquinol. This is Na(+)-translocating NADH-quinone reductase subunit E from Pasteurella multocida (strain Pm70).